The sequence spans 71 residues: DNA-directed RNA polymerase subunit omega (71 aa).

This sequence belongs to the RNA polymerase subunit omega family. In terms of assembly, the RNAP catalytic core consists of 2 alpha, 1 beta, 1 beta' and 1 omega subunit. When a sigma factor is associated with the core the holoenzyme is formed, which can initiate transcription.

The catalysed reaction is RNA(n) + a ribonucleoside 5'-triphosphate = RNA(n+1) + diphosphate. Its function is as follows. Promotes RNA polymerase assembly. Latches the N- and C-terminal regions of the beta' subunit thereby facilitating its interaction with the beta and alpha subunits. The protein is DNA-directed RNA polymerase subunit omega of Levilactobacillus brevis (strain ATCC 367 / BCRC 12310 / CIP 105137 / JCM 1170 / LMG 11437 / NCIMB 947 / NCTC 947) (Lactobacillus brevis).